The primary structure comprises 235 residues: Large ribosomal subunit protein uL1 (235 aa).

It belongs to the universal ribosomal protein uL1 family. Part of the 50S ribosomal subunit.

Binds directly to 23S rRNA. The L1 stalk is quite mobile in the ribosome, and is involved in E site tRNA release. Functionally, protein L1 is also a translational repressor protein, it controls the translation of the L11 operon by binding to its mRNA. The protein is Large ribosomal subunit protein uL1 of Nitratidesulfovibrio vulgaris (strain DSM 19637 / Miyazaki F) (Desulfovibrio vulgaris).